The chain runs to 547 residues: Methionine--tRNA ligase (547 aa).

The 'HIGH' region motif lies at 13-23 (PYANGPLHIGH). The Zn(2+) site is built by Cys-145, Cys-148, Cys-158, and Cys-161. Positions 334 to 338 (QFSKS) match the 'KMSKS' region motif. Residue Lys-337 participates in ATP binding.

It belongs to the class-I aminoacyl-tRNA synthetase family. MetG type 1 subfamily. Zn(2+) serves as cofactor.

The protein localises to the cytoplasm. The enzyme catalyses tRNA(Met) + L-methionine + ATP = L-methionyl-tRNA(Met) + AMP + diphosphate. Functionally, is required not only for elongation of protein synthesis but also for the initiation of all mRNA translation through initiator tRNA(fMet) aminoacylation. In Thermoplasma acidophilum (strain ATCC 25905 / DSM 1728 / JCM 9062 / NBRC 15155 / AMRC-C165), this protein is Methionine--tRNA ligase.